A 384-amino-acid polypeptide reads, in one-letter code: MNIDIEDFEKKPLYIQRIILRNSCIEFSKMLKKYWDKNIMIGIQISEREMSFEIEERDNKNEPIKITLPEYRSKGFKWYLAYLITLEYLRILKNGGNNDIVLLLDDPAVYLHPNVQKSFLEKLEELSKEYQILYNTHLMSLFNEEELDRVLLVYLDKENRTKIKRPWSNEQKDIIYPIRRALGVDKILFKENLSKILFVEGISDKFILEGLGKLETLKNLKNWYIHPLSGGDKLEDNEIVKKVRLYSCLSNFEEIKYYFLLDGDKKEKFERDKISNKIIFLGDENQEIEDLIDKNFYLDCVLETYKRIFTHDLEKFKKVKEIVEKLRKSKSKIIEELNNEFRLNNLGDFSKVDVAITIKRKLYENPELANKFEKIIDCLNGKII.

This is an uncharacterized protein from Methanocaldococcus jannaschii (strain ATCC 43067 / DSM 2661 / JAL-1 / JCM 10045 / NBRC 100440) (Methanococcus jannaschii).